The primary structure comprises 500 residues: tRNA (guanine(37)-N(1))-methyltransferase (500 aa).

S-adenosyl-L-methionine is bound by residues His-215, Asp-253–Leu-254, Asp-281–Ala-282, and Asn-312. The disordered stretch occupies residues Gln-463–Lys-500. Basic and acidic residues predominate over residues Asn-488–Lys-500.

Belongs to the class I-like SAM-binding methyltransferase superfamily. TRM5/TYW2 family. In terms of assembly, monomer.

It localises to the mitochondrion matrix. Its subcellular location is the nucleus. It is found in the cytoplasm. It catalyses the reaction guanosine(37) in tRNA + S-adenosyl-L-methionine = N(1)-methylguanosine(37) in tRNA + S-adenosyl-L-homocysteine + H(+). Its function is as follows. Specifically methylates the N1 position of guanosine-37 in various cytoplasmic and mitochondrial tRNAs. Methylation is not dependent on the nature of the nucleoside 5' of the target nucleoside. This is the first step in the biosynthesis of wybutosine (yW), a modified base adjacent to the anticodon of tRNAs and required for accurate decoding. The polypeptide is tRNA (guanine(37)-N(1))-methyltransferase (Anopheles darlingi (Mosquito)).